The primary structure comprises 392 residues: 1-deoxy-D-xylulose 5-phosphate reductoisomerase (392 aa).

Residues T10, G11, S12, I13, and N124 each coordinate NADPH. K125 is a 1-deoxy-D-xylulose 5-phosphate binding site. Residue E126 participates in NADPH binding. D150 provides a ligand contact to Mn(2+). 1-deoxy-D-xylulose 5-phosphate-binding residues include S151, E152, S180, and H203. Mn(2+) is bound at residue E152. Residue G209 participates in NADPH binding. The 1-deoxy-D-xylulose 5-phosphate site is built by S216, N221, K222, and E225. E225 serves as a coordination point for Mn(2+).

Belongs to the DXR family. Mg(2+) serves as cofactor. Requires Mn(2+) as cofactor.

The enzyme catalyses 2-C-methyl-D-erythritol 4-phosphate + NADP(+) = 1-deoxy-D-xylulose 5-phosphate + NADPH + H(+). It functions in the pathway isoprenoid biosynthesis; isopentenyl diphosphate biosynthesis via DXP pathway; isopentenyl diphosphate from 1-deoxy-D-xylulose 5-phosphate: step 1/6. In terms of biological role, catalyzes the NADPH-dependent rearrangement and reduction of 1-deoxy-D-xylulose-5-phosphate (DXP) to 2-C-methyl-D-erythritol 4-phosphate (MEP). In Saccharophagus degradans (strain 2-40 / ATCC 43961 / DSM 17024), this protein is 1-deoxy-D-xylulose 5-phosphate reductoisomerase.